The chain runs to 691 residues: Threonine--tRNA ligase (691 aa).

Residues 1 to 22 (MSVPAQPAPGADGGDPRQPIRV) are disordered. Residues 1–73 (MSVPAQPAPG…DADAEVTPIA (73 aa)) enclose the TGS domain. The segment at 268–574 (DHRKLGVELD…LTEHYAGAFP (307 aa)) is catalytic. Residues C373, H424, and H551 each contribute to the Zn(2+) site.

This sequence belongs to the class-II aminoacyl-tRNA synthetase family. As to quaternary structure, homodimer. Zn(2+) is required as a cofactor.

The protein localises to the cytoplasm. It catalyses the reaction tRNA(Thr) + L-threonine + ATP = L-threonyl-tRNA(Thr) + AMP + diphosphate + H(+). In terms of biological role, catalyzes the attachment of threonine to tRNA(Thr) in a two-step reaction: L-threonine is first activated by ATP to form Thr-AMP and then transferred to the acceptor end of tRNA(Thr). Also edits incorrectly charged L-seryl-tRNA(Thr). The polypeptide is Threonine--tRNA ligase (Mycobacterium ulcerans (strain Agy99)).